We begin with the raw amino-acid sequence, 164 residues long: MTFATTDLCDAHEDKLAAGTLRVLQPALRPYGGAARFAGPAATLKVFEDNTLVRAALEQDGGGRVLVVDGGASLRCALVGGNLGALAEKNGWAGIVVHGCVRDAAELRECKVGVLALATHPRKSDKRGAGERDVPVTVLGTRIAPGEWIYADDDGVLVSATSLT.

Substrate is bound by residues 80 to 83 (GGNL) and arginine 102. Aspartate 103 lines the a divalent metal cation pocket.

This sequence belongs to the class II aldolase/RraA-like family. As to quaternary structure, homotrimer. It depends on a divalent metal cation as a cofactor.

The catalysed reaction is 4-hydroxy-4-methyl-2-oxoglutarate = 2 pyruvate. The enzyme catalyses oxaloacetate + H(+) = pyruvate + CO2. Functionally, catalyzes the aldol cleavage of 4-hydroxy-4-methyl-2-oxoglutarate (HMG) into 2 molecules of pyruvate. Also contains a secondary oxaloacetate (OAA) decarboxylase activity due to the common pyruvate enolate transition state formed following C-C bond cleavage in the retro-aldol and decarboxylation reactions. The sequence is that of Putative 4-hydroxy-4-methyl-2-oxoglutarate aldolase from Burkholderia multivorans (strain ATCC 17616 / 249).